The primary structure comprises 36 residues: U1-ectatotoxin-Et1b subunit B (36 aa).

A disulfide bond links cysteine 11 and cysteine 33.

It belongs to the ectatomin family. Ectatomin-Et subfamily. As to quaternary structure, heterodimer of subunits A and B; disulfide-linked. As to expression, expressed by the venom gland.

The protein localises to the secreted. Its subcellular location is the target cell membrane. The protein is U1-ectatotoxin-Et1b subunit B of Ectatomma tuberculatum (Selva ant).